The chain runs to 283 residues: Cilia- and flagella-associated protein 77 (283 aa).

Residues 151 to 170 (DQEDRRQKEPPPIPPNMTFG) form a disordered region.

This sequence belongs to the CFAP77 family. As to quaternary structure, microtubule inner protein component of sperm flagellar doublet microtubules.

It is found in the cytoplasm. It localises to the cytoskeleton. Its subcellular location is the cilium axoneme. The protein resides in the flagellum axoneme. Functionally, microtubule inner protein (MIP) part of the dynein-decorated doublet microtubules (DMTs) in cilia axoneme, which is required for motile cilia beating. The polypeptide is Cilia- and flagella-associated protein 77 (Mus musculus (Mouse)).